The following is a 173-amino-acid chain: Shikimate kinase 1 (173 aa).

14–19 (GAGKST) contributes to the ATP binding site. Ser18 lines the Mg(2+) pocket. Residues Asp36, Arg60, and Gly82 each coordinate substrate. Residue Arg120 participates in ATP binding. Arg140 contacts substrate. Gln157 is a binding site for ATP.

It belongs to the shikimate kinase family. In terms of assembly, monomer. The cofactor is Mg(2+).

The protein resides in the cytoplasm. It catalyses the reaction shikimate + ATP = 3-phosphoshikimate + ADP + H(+). It functions in the pathway metabolic intermediate biosynthesis; chorismate biosynthesis; chorismate from D-erythrose 4-phosphate and phosphoenolpyruvate: step 5/7. Functionally, catalyzes the specific phosphorylation of the 3-hydroxyl group of shikimic acid using ATP as a cosubstrate. The chain is Shikimate kinase 1 from Sodalis glossinidius (strain morsitans).